The following is a 406-amino-acid chain: MKKKLILVLNCGSSSVKFSIIDVIEGVLYISGIANTINNVSFLKIYDIKKKIKIVKKNISTDSYKKLILLICDLLFIHFNKYLKLIIGIGHRIVHGGKDIKKSMIINKKILLKIKKSAIFAPLHNPYHLIAIKIILNKFVKLKNRNVAVFDTSFHQTMPKKSFLYGIPYSFYKKYSIRKYGAHGINHFYITHECSLFLKKSTNNLNIISCHLGSGSSITAIVNGKSIDTSMGLTPLEGLVMGTRCGDIDPYIIIYMIKKLNFSITQIQKILTKSSGVLGISSITSDFRELEKKYYSHKKAKLAIDIFCRRVSKYIAGYSSLMPKGKLDAIVFTGGIGENSSFIRKKIIKNLSIIGFFLDIEKNLIKTGNNNRFIHTINSKPILVIPADENKIIAKETYNILIKNNF.

N10 is a binding site for Mg(2+). Position 17 (K17) interacts with ATP. R92 contributes to the substrate binding site. The active-site Proton donor/acceptor is D151. ATP is bound by residues 211–215 (HLGSG), 286–288 (DFR), and 335–339 (GIGEN). Residue E389 participates in Mg(2+) binding.

It belongs to the acetokinase family. In terms of assembly, homodimer. Mg(2+) is required as a cofactor. It depends on Mn(2+) as a cofactor.

The protein resides in the cytoplasm. The enzyme catalyses acetate + ATP = acetyl phosphate + ADP. The protein operates within metabolic intermediate biosynthesis; acetyl-CoA biosynthesis; acetyl-CoA from acetate: step 1/2. In terms of biological role, catalyzes the formation of acetyl phosphate from acetate and ATP. Can also catalyze the reverse reaction. The polypeptide is Acetate kinase (Buchnera aphidicola subsp. Cinara cedri (strain Cc)).